The chain runs to 250 residues: MIVEVARVLASSKNAIAFTGAGISAESGVPTFRGKDGLWNKYRPEELATPEAFARNPKLVWEFYKWRINKILKAKPNPAHYALVELEDMGILRAVITQNVDDLHREAGTRNLIELHGNIFRVKCTKCNFKEYLKESQRLEEVLKEDLPKCPRCGSLLRPDVVWFGEPLPREELDRAFKLAEKADAVLVVGTSGLVYPAAYIPYIVKESGGTVIEVNVEESAITPIADFFLRGRAGEVLPRVVHEVRRLLQ.

The Deacetylase sirtuin-type domain maps to 1–250 (MIVEVARVLA…VVHEVRRLLQ (250 aa)). 20-39 (GAGISAESGVPTFRGKDGLW) provides a ligand contact to NAD(+). Residues Tyr-64 and Arg-67 each coordinate substrate. 98-101 (QNVD) is an NAD(+) binding site. Catalysis depends on His-116, which acts as the Proton acceptor. 4 residues coordinate Zn(2+): Cys-124, Cys-127, Cys-150, and Cys-153. NAD(+) is bound by residues 190-192 (GTS), 216-218 (NVE), and Ala-234.

Belongs to the sirtuin family. Class III subfamily. The cofactor is Zn(2+).

The protein localises to the cytoplasm. The enzyme catalyses N(6)-acetyl-L-lysyl-[protein] + NAD(+) + H2O = 2''-O-acetyl-ADP-D-ribose + nicotinamide + L-lysyl-[protein]. It carries out the reaction N(6)-succinyl-L-lysyl-[protein] + NAD(+) + H2O = 2''-O-succinyl-ADP-D-ribose + nicotinamide + L-lysyl-[protein]. In terms of biological role, NAD-dependent lysine deacetylase and desuccinylase that specifically removes acetyl and succinyl groups on target proteins. Modulates the activities of several proteins which are inactive in their acylated form. Deacetylates the N-terminal lysine residue of Alba, the major archaeal chromatin protein and that, in turn, increases Alba's DNA binding affinity, thereby repressing transcription. This is NAD-dependent protein deacylase from Pyrococcus abyssi (strain GE5 / Orsay).